A 245-amino-acid chain; its full sequence is Transmembrane protein 116 (245 aa).

A run of 4 helical transmembrane segments spans residues Met24–Gly44, Gly88–Ile108, Phe141–Leu161, and Leu173–Thr195.

It is found in the membrane. This is Transmembrane protein 116 (TMEM116) from Homo sapiens (Human).